We begin with the raw amino-acid sequence, 747 residues long: ESX-1 secretion system protein EccCa1 (747 aa).

A run of 3 helical transmembrane segments spans residues Ile-41–Gly-61, Leu-65–Ala-85, and Phe-222–Ile-242. The region spanning Gly-456 to Lys-665 is the FtsK domain. Gly-479–Ser-486 is an ATP binding site.

As to quaternary structure, part of the ESX-1 / type VII secretion system (T7SS), which is composed of cytosolic and membrane components. The ESX-1 membrane complex is composed of EccB1, EccCa1, EccCb1, EccD1 and EccE1.

The protein resides in the cell inner membrane. Part of the ESX-1 specialized secretion system, which delivers several virulence factors to host cells during infection, including the key virulence factors EsxA (ESAT-6) and EsxB (CFP-10). This Mycobacterium tuberculosis (strain CDC 1551 / Oshkosh) protein is ESX-1 secretion system protein EccCa1.